The sequence spans 72 residues: DNA gyrase inhibitor YacG (72 aa).

C7, C10, C26, and C30 together coordinate Zn(2+). Residues 44-72 (SIAGEEHTPSSDTARPQLSAEDLALLEQD) form a disordered region.

The protein belongs to the DNA gyrase inhibitor YacG family. As to quaternary structure, interacts with GyrB. Zn(2+) is required as a cofactor.

Inhibits all the catalytic activities of DNA gyrase by preventing its interaction with DNA. Acts by binding directly to the C-terminal domain of GyrB, which probably disrupts DNA binding by the gyrase. This chain is DNA gyrase inhibitor YacG, found in Tolumonas auensis (strain DSM 9187 / NBRC 110442 / TA 4).